The primary structure comprises 234 residues: Large ribosomal subunit protein uL1 (234 aa).

This sequence belongs to the universal ribosomal protein uL1 family. As to quaternary structure, part of the 50S ribosomal subunit.

In terms of biological role, binds directly to 23S rRNA. The L1 stalk is quite mobile in the ribosome, and is involved in E site tRNA release. Functionally, protein L1 is also a translational repressor protein, it controls the translation of the L11 operon by binding to its mRNA. This chain is Large ribosomal subunit protein uL1, found in Anaeromyxobacter dehalogenans (strain 2CP-C).